The chain runs to 194 residues: Large ribosomal subunit protein bL25B (194 aa).

This sequence belongs to the bacterial ribosomal protein bL25 family. CTC subfamily. As to quaternary structure, part of the 50S ribosomal subunit; part of the 5S rRNA/L5/L18/L25 subcomplex. Contacts the 5S rRNA. Binds to the 5S rRNA independently of L5 and L18.

In terms of biological role, this is one of the proteins that binds to the 5S RNA in the ribosome where it forms part of the central protuberance. The protein is Large ribosomal subunit protein bL25B of Symbiobacterium thermophilum (strain DSM 24528 / JCM 14929 / IAM 14863 / T).